Here is a 254-residue protein sequence, read N- to C-terminus: Probable phosphatase Sbal_1472 (254 aa).

The Zn(2+) site is built by H8, H10, H16, H41, E74, H102, H132, D193, and H195.

It belongs to the PHP family. Zn(2+) is required as a cofactor.

This chain is Probable phosphatase Sbal_1472, found in Shewanella baltica (strain OS155 / ATCC BAA-1091).